A 263-amino-acid polypeptide reads, in one-letter code: Small ribosomal subunit protein eS4 (263 aa).

One can recognise an S4 RNA-binding domain in the interval 42-104 (LPLIIFLRNR…TGENFRLIYD (63 aa)).

It belongs to the eukaryotic ribosomal protein eS4 family.

This Ictalurus punctatus (Channel catfish) protein is Small ribosomal subunit protein eS4 (rps4).